Reading from the N-terminus, the 314-residue chain is Coproporphyrin III ferrochelatase (314 aa).

2 residues coordinate Fe(2+): His186 and Glu268.

This sequence belongs to the ferrochelatase family.

The protein localises to the cytoplasm. The enzyme catalyses Fe-coproporphyrin III + 2 H(+) = coproporphyrin III + Fe(2+). It functions in the pathway porphyrin-containing compound metabolism; protoheme biosynthesis. Involved in coproporphyrin-dependent heme b biosynthesis. Catalyzes the insertion of ferrous iron into coproporphyrin III to form Fe-coproporphyrin III. The chain is Coproporphyrin III ferrochelatase from Lactococcus lactis subsp. lactis (strain IL1403) (Streptococcus lactis).